The primary structure comprises 339 residues: DNA-directed RNA polymerase subunit alpha (339 aa).

The tract at residues 1 to 237 is alpha N-terminal domain (alpha-NTD); the sequence is MENELMYMNW…EQMNVFINFD (237 aa). The interval 256–339 is alpha C-terminal domain (alpha-CTD); sequence FNENLYRSVN…PPAEDNKEGE (84 aa).

It belongs to the RNA polymerase alpha chain family. As to quaternary structure, homodimer. The RNAP catalytic core consists of 2 alpha, 1 beta, 1 beta' and 1 omega subunit. When a sigma factor is associated with the core the holoenzyme is formed, which can initiate transcription.

The catalysed reaction is RNA(n) + a ribonucleoside 5'-triphosphate = RNA(n+1) + diphosphate. In terms of biological role, DNA-dependent RNA polymerase catalyzes the transcription of DNA into RNA using the four ribonucleoside triphosphates as substrates. The protein is DNA-directed RNA polymerase subunit alpha of Desulfosudis oleivorans (strain DSM 6200 / JCM 39069 / Hxd3) (Desulfococcus oleovorans).